We begin with the raw amino-acid sequence, 133 residues long: Large ribosomal subunit protein eL14 (133 aa).

It belongs to the eukaryotic ribosomal protein eL14 family.

In Griffithsia japonica (Red alga), this protein is Large ribosomal subunit protein eL14 (RPL14).